The sequence spans 115 residues: U3-lycotoxin-Ls1a (115 aa).

A signal peptide spans 1-20; it reads MKFVLLFGVLLLTLFSYSSA. The propeptide occupies 21–44; it reads EMLDDFDQADEDELLSLIEKEEAR. Cystine bridges form between cysteine 48–cysteine 63, cysteine 55–cysteine 72, cysteine 62–cysteine 87, and cysteine 74–cysteine 85.

The protein belongs to the neurotoxin 19 (CSTX) family. 01 subfamily. As to expression, expressed by the venom gland.

The protein localises to the secreted. The protein is U3-lycotoxin-Ls1a of Lycosa singoriensis (Wolf spider).